Consider the following 602-residue polypeptide: NADH-quinone oxidoreductase subunit C/D (602 aa).

Positions 1-192 (MVNNMTDLTA…DPFELTKAKQ (192 aa)) are NADH dehydrogenase I subunit C. The interval 216 to 602 (DFMFLNLGPN…IDFVMSDVDR (387 aa)) is NADH dehydrogenase I subunit D.

In the N-terminal section; belongs to the complex I 30 kDa subunit family. The protein in the C-terminal section; belongs to the complex I 49 kDa subunit family. As to quaternary structure, NDH-1 is composed of 13 different subunits. Subunits NuoB, CD, E, F, and G constitute the peripheral sector of the complex.

Its subcellular location is the cell inner membrane. The enzyme catalyses a quinone + NADH + 5 H(+)(in) = a quinol + NAD(+) + 4 H(+)(out). Functionally, NDH-1 shuttles electrons from NADH, via FMN and iron-sulfur (Fe-S) centers, to quinones in the respiratory chain. The immediate electron acceptor for the enzyme in this species is believed to be ubiquinone. Couples the redox reaction to proton translocation (for every two electrons transferred, four hydrogen ions are translocated across the cytoplasmic membrane), and thus conserves the redox energy in a proton gradient. This is NADH-quinone oxidoreductase subunit C/D from Klebsiella pneumoniae (strain 342).